The chain runs to 557 residues: Potassium-transporting ATPase potassium-binding subunit (557 aa).

The next 12 helical transmembrane spans lie at 5–25 (GFLL…PLGS), 63–83 (LSAI…MLLG), 132–152 (GLTV…FALI), 170–190 (LLRI…LFFI), 253–273 (FVQM…FGEV), 283–303 (LLWA…WAEV), 329–349 (VLVS…AVIA), 356–376 (ALGG…FGGV), 379–399 (GLYG…LMIG), 416–436 (LTAL…ALAM), 484–504 (LLAL…MAIA), and 526–546 (LFVG…FIPA).

Belongs to the KdpA family. As to quaternary structure, the system is composed of three essential subunits: KdpA, KdpB and KdpC.

Its subcellular location is the cell inner membrane. In terms of biological role, part of the high-affinity ATP-driven potassium transport (or Kdp) system, which catalyzes the hydrolysis of ATP coupled with the electrogenic transport of potassium into the cytoplasm. This subunit binds the periplasmic potassium ions and delivers the ions to the membrane domain of KdpB through an intramembrane tunnel. The polypeptide is Potassium-transporting ATPase potassium-binding subunit (Escherichia coli O127:H6 (strain E2348/69 / EPEC)).